We begin with the raw amino-acid sequence, 189 residues long: Probable nicotinate-nucleotide adenylyltransferase (189 aa).

The protein belongs to the NadD family.

It catalyses the reaction nicotinate beta-D-ribonucleotide + ATP + H(+) = deamido-NAD(+) + diphosphate. Its pathway is cofactor biosynthesis; NAD(+) biosynthesis; deamido-NAD(+) from nicotinate D-ribonucleotide: step 1/1. In terms of biological role, catalyzes the reversible adenylation of nicotinate mononucleotide (NaMN) to nicotinic acid adenine dinucleotide (NaAD). The sequence is that of Probable nicotinate-nucleotide adenylyltransferase from Caulobacter sp. (strain K31).